We begin with the raw amino-acid sequence, 333 residues long: Salivary glue protein Sgs-3 (333 aa).

The signal sequence occupies residues 1-23 (MKLTIATALVGILLIACAHVANG). The segment at 51-285 (TCRPPTTTRC…ATARPTSKPC (235 aa)) is disordered. Residues 60 to 73 (CPPPTTTRCPPPTR) are compositionally biased toward pro residues. The segment covering 74-88 (PAECTATTKRPTARP) has biased composition (low complexity). The segment covering 89–277 (TTKRATTRRT…TKRATTKRAT (189 aa)) has biased composition (basic residues).

This is Salivary glue protein Sgs-3 (Sgs3) from Drosophila erecta (Fruit fly).